The primary structure comprises 150 residues: Large ribosomal subunit protein bL9 (150 aa).

It belongs to the bacterial ribosomal protein bL9 family.

In terms of biological role, binds to the 23S rRNA. The protein is Large ribosomal subunit protein bL9 of Burkholderia pseudomallei (strain 668).